The following is a 324-amino-acid chain: ATP-dependent 6-phosphofructokinase (324 aa).

ATP is bound at residue G15. 25 to 29 (RGVVR) is a binding site for ADP. Residues 76–77 (RF) and 106–109 (GDGS) contribute to the ATP site. Mg(2+) is bound at residue D107. Substrate is bound at residue 130–132 (TID). The Proton acceptor role is filled by D132. R159 contributes to the ADP binding site. Residues R167 and 174 to 176 (MGR) contribute to the substrate site. ADP-binding positions include 190–192 (GCE), K216, and 218–220 (KRH). Substrate contacts are provided by residues E227, R248, and 254 to 257 (HIQR).

It belongs to the phosphofructokinase type A (PFKA) family. ATP-dependent PFK group I subfamily. Prokaryotic clade 'B1' sub-subfamily. Homotetramer. The cofactor is Mg(2+).

It localises to the cytoplasm. It carries out the reaction beta-D-fructose 6-phosphate + ATP = beta-D-fructose 1,6-bisphosphate + ADP + H(+). It participates in carbohydrate degradation; glycolysis; D-glyceraldehyde 3-phosphate and glycerone phosphate from D-glucose: step 3/4. Its activity is regulated as follows. Allosterically activated by ADP and other diphosphonucleosides, and allosterically inhibited by phosphoenolpyruvate. Catalyzes the phosphorylation of D-fructose 6-phosphate to fructose 1,6-bisphosphate by ATP, the first committing step of glycolysis. This chain is ATP-dependent 6-phosphofructokinase, found in Haemophilus ducreyi (strain 35000HP / ATCC 700724).